A 301-amino-acid chain; its full sequence is GTPase Era (301 aa).

The 169-residue stretch at Tyr-7–Glu-175 folds into the Era-type G domain. Residues Gly-15–Ser-22 are G1. Gly-15–Ser-22 is a binding site for GTP. A G2 region spans residues Gln-41–His-45. The G3 stretch occupies residues Asp-62–Gly-65. Residues Asp-62–Leu-66 and Asn-124–Asp-127 contribute to the GTP site. The interval Asn-124 to Asp-127 is G4. The segment at Ile-154 to Ala-156 is G5. The KH type-2 domain maps to Leu-206–Ser-283.

The protein belongs to the TRAFAC class TrmE-Era-EngA-EngB-Septin-like GTPase superfamily. Era GTPase family. In terms of assembly, monomer.

Its subcellular location is the cytoplasm. The protein resides in the cell inner membrane. Functionally, an essential GTPase that binds both GDP and GTP, with rapid nucleotide exchange. Plays a role in 16S rRNA processing and 30S ribosomal subunit biogenesis and possibly also in cell cycle regulation and energy metabolism. This Salmonella arizonae (strain ATCC BAA-731 / CDC346-86 / RSK2980) protein is GTPase Era.